We begin with the raw amino-acid sequence, 231 residues long: Cytochrome c oxidase subunit 2 (231 aa).

The Mitochondrial intermembrane portion of the chain corresponds to 1 to 14 (MAHPSQLGLQDAAS). A helical transmembrane segment spans residues 15-45 (PVMEELLHFHDHALMIVFLISTLVFYIILAM). Topologically, residues 46-59 (MTTKMTDKYILDAQ) are mitochondrial matrix. The chain crosses the membrane as a helical span at residues 60 to 87 (EIEIVWTLLPAIVLILVALPSLRILYLI). The Mitochondrial intermembrane portion of the chain corresponds to 88-231 (DEVENPHLTI…WSSSMLEEAX (144 aa)). Cu cation-binding residues include H161, C196, E198, C200, H204, and M207. E198 is a Mg(2+) binding site.

The protein belongs to the cytochrome c oxidase subunit 2 family. Component of the cytochrome c oxidase (complex IV, CIV), a multisubunit enzyme composed of 14 subunits. The complex is composed of a catalytic core of 3 subunits MT-CO1, MT-CO2 and MT-CO3, encoded in the mitochondrial DNA, and 11 supernumerary subunits COX4I, COX5A, COX5B, COX6A, COX6B, COX6C, COX7A, COX7B, COX7C, COX8 and NDUFA4, which are encoded in the nuclear genome. The complex exists as a monomer or a dimer and forms supercomplexes (SCs) in the inner mitochondrial membrane with NADH-ubiquinone oxidoreductase (complex I, CI) and ubiquinol-cytochrome c oxidoreductase (cytochrome b-c1 complex, complex III, CIII), resulting in different assemblies (supercomplex SCI(1)III(2)IV(1) and megacomplex MCI(2)III(2)IV(2)). Found in a complex with TMEM177, COA6, COX18, COX20, SCO1 and SCO2. Interacts with TMEM177 in a COX20-dependent manner. Interacts with COX20. Interacts with COX16. Requires Cu cation as cofactor.

The protein resides in the mitochondrion inner membrane. It carries out the reaction 4 Fe(II)-[cytochrome c] + O2 + 8 H(+)(in) = 4 Fe(III)-[cytochrome c] + 2 H2O + 4 H(+)(out). In terms of biological role, component of the cytochrome c oxidase, the last enzyme in the mitochondrial electron transport chain which drives oxidative phosphorylation. The respiratory chain contains 3 multisubunit complexes succinate dehydrogenase (complex II, CII), ubiquinol-cytochrome c oxidoreductase (cytochrome b-c1 complex, complex III, CIII) and cytochrome c oxidase (complex IV, CIV), that cooperate to transfer electrons derived from NADH and succinate to molecular oxygen, creating an electrochemical gradient over the inner membrane that drives transmembrane transport and the ATP synthase. Cytochrome c oxidase is the component of the respiratory chain that catalyzes the reduction of oxygen to water. Electrons originating from reduced cytochrome c in the intermembrane space (IMS) are transferred via the dinuclear copper A center (CU(A)) of subunit 2 and heme A of subunit 1 to the active site in subunit 1, a binuclear center (BNC) formed by heme A3 and copper B (CU(B)). The BNC reduces molecular oxygen to 2 water molecules using 4 electrons from cytochrome c in the IMS and 4 protons from the mitochondrial matrix. This Latimeria chalumnae (Coelacanth) protein is Cytochrome c oxidase subunit 2 (MT-CO2).